The sequence spans 492 residues: N-succinylglutamate 5-semialdehyde dehydrogenase (492 aa).

220-225 (GSASTG) is a binding site for NAD(+). Catalysis depends on residues glutamate 243 and cysteine 277.

Belongs to the aldehyde dehydrogenase family. AstD subfamily.

It catalyses the reaction N-succinyl-L-glutamate 5-semialdehyde + NAD(+) + H2O = N-succinyl-L-glutamate + NADH + 2 H(+). It participates in amino-acid degradation; L-arginine degradation via AST pathway; L-glutamate and succinate from L-arginine: step 4/5. Catalyzes the NAD-dependent reduction of succinylglutamate semialdehyde into succinylglutamate. The polypeptide is N-succinylglutamate 5-semialdehyde dehydrogenase (Salmonella typhimurium (strain LT2 / SGSC1412 / ATCC 700720)).